A 274-amino-acid chain; its full sequence is 2,3,4,5-tetrahydropyridine-2,6-dicarboxylate N-succinyltransferase (274 aa).

Belongs to the transferase hexapeptide repeat family.

The protein resides in the cytoplasm. The enzyme catalyses (S)-2,3,4,5-tetrahydrodipicolinate + succinyl-CoA + H2O = (S)-2-succinylamino-6-oxoheptanedioate + CoA. It functions in the pathway amino-acid biosynthesis; L-lysine biosynthesis via DAP pathway; LL-2,6-diaminopimelate from (S)-tetrahydrodipicolinate (succinylase route): step 1/3. This Klebsiella pneumoniae (strain 342) protein is 2,3,4,5-tetrahydropyridine-2,6-dicarboxylate N-succinyltransferase.